The primary structure comprises 384 residues: Probable intron-encoded endonuclease Cox1-I1b (384 aa).

This sequence belongs to the LAGLIDADG endonuclease family.

It localises to the mitochondrion. In terms of biological role, probable mitochondrial DNA endonuclease involved in intron homing. This Schizosaccharomyces pombe (strain 972 / ATCC 24843) (Fission yeast) protein is Probable intron-encoded endonuclease Cox1-I1b (cox1-I1b).